Consider the following 218-residue polypeptide: MAMFEQMRANVGKLLKGIDRYNPENLATLERYVETQAKENAYDLEANLAVLKLYQFNPAFFQTTVTAQILLKALTNLPHTDFTLCKCMIDQAHQEERPIRQILYLGDLLETCHFQAFWQALDENMDLLEGITGFEDSVRKFICHVVGITYQHIDRWLLAEMLGDLTDNQLKVWMSKYGWSADESGQVFICSQEESIKPKNIVEKIDFDSVSSIMASSQ.

At alanine 2 the chain carries N-acetylalanine. Position 28 is a phosphothreonine (threonine 28). In terms of domain architecture, PCI spans 42 to 204 (YDLEANLAVL…SIKPKNIVEK (163 aa)). At serine 217 the chain carries Phosphoserine.

The protein belongs to the eIF-3 subunit K family. In terms of assembly, component of the eukaryotic translation initiation factor 3 (eIF-3) complex, which is composed of 13 subunits: EIF3A, EIF3B, EIF3C, EIF3D, EIF3E, EIF3F, EIF3G, EIF3H, EIF3I, EIF3J, EIF3K, EIF3L and EIF3M. The eIF-3 complex appears to include 3 stable modules: module A is composed of EIF3A, EIF3B, EIF3G and EIF3I; module B is composed of EIF3F, EIF3H, and EIF3M; and module C is composed of EIF3C, EIF3D, EIF3E, EIF3K and EIF3L. EIF3C of module C binds EIF3B of module A and EIF3H of module B, thereby linking the three modules. EIF3J is a labile subunit that binds to the eIF-3 complex via EIF3B. The eIF-3 complex interacts with RPS6KB1 under conditions of nutrient depletion. Mitogenic stimulation leads to binding and activation of a complex composed of MTOR and RPTOR, leading to phosphorylation and release of RPS6KB1 and binding of EIF4B to eIF-3. Identified in a HCV IRES-mediated translation complex, at least composed of EIF3C, IGF2BP1, RPS3 and HCV RNA-replicon. Interacts with ALKBH4, IFIT1 and IFIT2.

The protein resides in the nucleus. It localises to the cytoplasm. In terms of biological role, component of the eukaryotic translation initiation factor 3 (eIF-3) complex, which is required for several steps in the initiation of protein synthesis. The eIF-3 complex associates with the 40S ribosome and facilitates the recruitment of eIF-1, eIF-1A, eIF-2:GTP:methionyl-tRNAi and eIF-5 to form the 43S pre-initiation complex (43S PIC). The eIF-3 complex stimulates mRNA recruitment to the 43S PIC and scanning of the mRNA for AUG recognition. The eIF-3 complex is also required for disassembly and recycling of post-termination ribosomal complexes and subsequently prevents premature joining of the 40S and 60S ribosomal subunits prior to initiation. The eIF-3 complex specifically targets and initiates translation of a subset of mRNAs involved in cell proliferation, including cell cycling, differentiation and apoptosis, and uses different modes of RNA stem-loop binding to exert either translational activation or repression. This chain is Eukaryotic translation initiation factor 3 subunit K (Eif3k), found in Mus musculus (Mouse).